The chain runs to 420 residues: Tyrosine--tRNA ligase (420 aa).

Residue Tyr33 participates in L-tyrosine binding. Residues 38–47 (PTADSLHVGH) carry the 'HIGH' region motif. 2 residues coordinate L-tyrosine: Tyr167 and Gln171. Positions 227-231 (KFGKT) match the 'KMSKS' region motif. Lys230 lines the ATP pocket. One can recognise an S4 RNA-binding domain in the interval 353–419 (LTVADLLVKV…GKRNYALVKV (67 aa)).

Belongs to the class-I aminoacyl-tRNA synthetase family. TyrS type 1 subfamily. In terms of assembly, homodimer.

The protein localises to the cytoplasm. It carries out the reaction tRNA(Tyr) + L-tyrosine + ATP = L-tyrosyl-tRNA(Tyr) + AMP + diphosphate + H(+). In terms of biological role, catalyzes the attachment of tyrosine to tRNA(Tyr) in a two-step reaction: tyrosine is first activated by ATP to form Tyr-AMP and then transferred to the acceptor end of tRNA(Tyr). The polypeptide is Tyrosine--tRNA ligase (Anaeromyxobacter dehalogenans (strain 2CP-C)).